Here is a 416-residue protein sequence, read N- to C-terminus: Serine hydroxymethyltransferase (416 aa).

Residues leucine 121 and glycine 125–leucine 127 each bind (6S)-5,6,7,8-tetrahydrofolate. Position 229 is an N6-(pyridoxal phosphate)lysine (lysine 229).

Belongs to the SHMT family. As to quaternary structure, homodimer. It depends on pyridoxal 5'-phosphate as a cofactor.

It localises to the cytoplasm. It carries out the reaction (6R)-5,10-methylene-5,6,7,8-tetrahydrofolate + glycine + H2O = (6S)-5,6,7,8-tetrahydrofolate + L-serine. It participates in one-carbon metabolism; tetrahydrofolate interconversion. The protein operates within amino-acid biosynthesis; glycine biosynthesis; glycine from L-serine: step 1/1. Catalyzes the reversible interconversion of serine and glycine with tetrahydrofolate (THF) serving as the one-carbon carrier. This reaction serves as the major source of one-carbon groups required for the biosynthesis of purines, thymidylate, methionine, and other important biomolecules. Also exhibits THF-independent aldolase activity toward beta-hydroxyamino acids, producing glycine and aldehydes, via a retro-aldol mechanism. This is Serine hydroxymethyltransferase from Aromatoleum aromaticum (strain DSM 19018 / LMG 30748 / EbN1) (Azoarcus sp. (strain EbN1)).